The following is a 1423-amino-acid chain: Protein phosphatase Slingshot homolog 2 (1423 aa).

Residues 1-37 (MALVTVQRSPTPSTTSSPCASEADSGEEECRSQPRSI) form a disordered region. Over residues 9–18 (SPTPSTTSSP) the composition is skewed to low complexity. Serine 17, serine 25, and serine 36 each carry phosphoserine. Residues 248–303 (ERTERLIKTKLREIMMQKDLENITSKEIRTELEMQMVCNLREFKEFIDNEMIVILG) form the DEK-C domain. One can recognise a Tyrosine-protein phosphatase domain in the interval 307–448 (SPTQIFEHVF…LEEYQGILLA (142 aa)). The Phosphocysteine intermediate role is filled by cysteine 392. Serine 461, serine 487, serine 534, serine 631, and serine 633 each carry phosphoserine. 10 disordered regions span residues 617–641 (TSPL…CQTE), 664–684 (QETR…GGRN), 696–728 (PSKV…QSKA), 797–825 (ENKP…MCNP), 840–862 (EGEP…AKWY), 877–954 (LRQE…NATV), 962–981 (FDHL…TQQE), 1019–1041 (TSPN…EQGL), 1070–1108 (SLHP…SSLS), and 1144–1179 (TEQS…YKDS). Over residues 621-635 (KDPPMSPDPESPSPQ) the composition is skewed to pro residues. The span at 664 to 680 (QETRSRSFSHSRMEELG) shows a compositional bias: basic and acidic residues. Positions 889-904 (TCTSLSTRKNSKNDSS) are enriched in polar residues. Residues 910–932 (PKGKSDEAPPEHSFVLKEPEMSK) are compositionally biased toward basic and acidic residues. Positions 941-953 (EAGSLSHSEQNAT) are enriched in polar residues. The span at 1019-1034 (TSPNHTGPGSEIATSE) shows a compositional bias: polar residues. Over residues 1144–1172 (TEQSSTTDEPSAEQVSWEESQESPLSSGS) the composition is skewed to polar residues. Phosphoserine is present on serine 1217. Threonine 1422 carries the phosphothreonine modification.

This sequence belongs to the protein-tyrosine phosphatase family. In terms of assembly, interacts with filamentous actin.

It is found in the cytoplasm. Its subcellular location is the cytoskeleton. The protein localises to the cell junction. The protein resides in the focal adhesion. It localises to the cytoplasmic vesicle. It is found in the secretory vesicle. Its subcellular location is the acrosome. The catalysed reaction is O-phospho-L-tyrosyl-[protein] + H2O = L-tyrosyl-[protein] + phosphate. The enzyme catalyses O-phospho-L-seryl-[protein] + H2O = L-seryl-[protein] + phosphate. It catalyses the reaction O-phospho-L-threonyl-[protein] + H2O = L-threonyl-[protein] + phosphate. Functionally, protein phosphatase which regulates actin filament dynamics. Dephosphorylates and activates the actin binding/depolymerizing factor cofilin, which subsequently binds to actin filaments and stimulates their disassembly. Inhibitory phosphorylation of cofilin is mediated by LIMK1, which may also be dephosphorylated and inactivated by this protein. Required for spermatogenesis. Involved in acrosome biogenesis, probably by regulating cofilin-mediated actin cytoskeleton remodeling during proacrosomal vesicle fusion and/or Golgi to perinuclear vesicle trafficking. This is Protein phosphatase Slingshot homolog 2 (SSH2) from Homo sapiens (Human).